Reading from the N-terminus, the 25-residue chain is Nicotinic acetylcholine receptor-binding protein Mnn-4 (25 aa).

A disulfide bridge links Cys3 with Cys20.

The protein belongs to the three-finger toxin family. Short-chain subfamily. In terms of tissue distribution, expressed by the venom gland.

Its subcellular location is the secreted. Its function is as follows. Binds and may inhibit nicotinic acetylcholine receptors (nAChR). The sequence is that of Nicotinic acetylcholine receptor-binding protein Mnn-4 from Micrurus nigrocinctus (Central American coral snake).